The primary structure comprises 583 residues: Asparagine synthetase, root [glutamine-hydrolyzing] (583 aa).

The For GATase activity role is filled by C2. In terms of domain architecture, Glutamine amidotransferase type-2 spans 2–185; the sequence is CGILAVLGCS…PGHLYSSKDS (184 aa). L-glutamine contacts are provided by residues 50-54, 75-77, and D98; these read RLAIV and NGE. ATP contacts are provided by residues L231, V267, and 341 to 342; that span reads SG. In terms of domain architecture, Asparagine synthetase spans 237 to 516; it reads DSSLVASITS…PQNSARLTVP (280 aa).

In terms of tissue distribution, roots.

It carries out the reaction L-aspartate + L-glutamine + ATP + H2O = L-asparagine + L-glutamate + AMP + diphosphate + H(+). It functions in the pathway amino-acid biosynthesis; L-asparagine biosynthesis; L-asparagine from L-aspartate (L-Gln route): step 1/1. The chain is Asparagine synthetase, root [glutamine-hydrolyzing] (AS2) from Pisum sativum (Garden pea).